A 249-amino-acid polypeptide reads, in one-letter code: Vacuolar iron transporter 1 (249 aa).

Over 1–36 (MADGANDGGNPGAEEQQRLLDQHKEAHFTAGEIVRD) the chain is Cytoplasmic. The chain crosses the membrane as a helical span at residues 37–57 (IIIGVSDGLTVPFALAAGLSG). Topologically, residues 58 to 63 (ANASSS) are vacuolar. The helical transmembrane segment at 64 to 84 (IVLTAGIAEVAAGAISMGLGG) threads the bilayer. Topologically, residues 85–170 (YLAAKSEADN…PKRALQSAFT (86 aa)) are cytoplasmic. Residues 90 to 165 (SEADNYAREL…LEKPDPKRAL (76 aa)) are cytoplasmic metal binding domain (MBD). Fe cation-binding residues include E102, E105, E113, E116, M149, and E153. A helical transmembrane segment spans residues 171-191 (IAIAYVLGGLVPLIPYMFIPV). The Vacuolar segment spans residues 192–194 (ARK). The helical transmembrane segment at 195-215 (AVVASVILTLMALLIFGYAKG) threads the bilayer. Topologically, residues 216 to 226 (YFTDNKPFKSA) are cytoplasmic. A helical transmembrane segment spans residues 227-247 (LQTALIGAIASAAAFGMAKAV). Topologically, residues 248 to 249 (QS) are vacuolar.

Belongs to the CCC1 family. In terms of assembly, homodimer. The dimeric interaction is mediated by both the transmembrane domains (TMDs) and the cytoplasmic metal binding domain (MBD).

Its subcellular location is the vacuole membrane. It carries out the reaction Fe(2+)(in) = Fe(2+)(out). With respect to regulation, transport of iron ions is inhibited by zinc ions. Vacuolar iron transporter involved in the transfer of iron ions from the cytosol to the vacuole for intracellular iron storage. Can transport cobalt ions from the cytosol to the vacuole. The polypeptide is Vacuolar iron transporter 1 (Eucalyptus grandis (Flooded gum)).